The following is a 240-amino-acid chain: Biosynthetic peptidoglycan transglycosylase (240 aa).

The helical transmembrane segment at 12–31 threads the bilayer; that stretch reads ALLWFAGGSVLLVLVFRFVP.

This sequence belongs to the glycosyltransferase 51 family.

The protein localises to the cell inner membrane. The catalysed reaction is [GlcNAc-(1-&gt;4)-Mur2Ac(oyl-L-Ala-gamma-D-Glu-L-Lys-D-Ala-D-Ala)](n)-di-trans,octa-cis-undecaprenyl diphosphate + beta-D-GlcNAc-(1-&gt;4)-Mur2Ac(oyl-L-Ala-gamma-D-Glu-L-Lys-D-Ala-D-Ala)-di-trans,octa-cis-undecaprenyl diphosphate = [GlcNAc-(1-&gt;4)-Mur2Ac(oyl-L-Ala-gamma-D-Glu-L-Lys-D-Ala-D-Ala)](n+1)-di-trans,octa-cis-undecaprenyl diphosphate + di-trans,octa-cis-undecaprenyl diphosphate + H(+). It participates in cell wall biogenesis; peptidoglycan biosynthesis. Peptidoglycan polymerase that catalyzes glycan chain elongation from lipid-linked precursors. The chain is Biosynthetic peptidoglycan transglycosylase from Pseudomonas fluorescens (strain Pf0-1).